A 331-amino-acid polypeptide reads, in one-letter code: Ketol-acid reductoisomerase (NADP(+)) (331 aa).

The KARI N-terminal Rossmann domain occupies 2–182; the sequence is AQLFYDSDAD…GGTRAGILET (181 aa). Residues 25–28, Ser-51, Ser-53, and 83–86 each bind NADP(+); these read YGSQ and DEFQ. His-108 is an active-site residue. Position 134 (Gly-134) interacts with NADP(+). A KARI C-terminal knotted domain is found at 183–328; that stretch reads NFKEETETDL…KGLRSMFSWL (146 aa). Mg(2+) is bound by residues Asp-191, Glu-195, Glu-227, and Glu-231. Ser-252 is a substrate binding site.

The protein belongs to the ketol-acid reductoisomerase family. It depends on Mg(2+) as a cofactor.

The enzyme catalyses (2R)-2,3-dihydroxy-3-methylbutanoate + NADP(+) = (2S)-2-acetolactate + NADPH + H(+). It catalyses the reaction (2R,3R)-2,3-dihydroxy-3-methylpentanoate + NADP(+) = (S)-2-ethyl-2-hydroxy-3-oxobutanoate + NADPH + H(+). It participates in amino-acid biosynthesis; L-isoleucine biosynthesis; L-isoleucine from 2-oxobutanoate: step 2/4. Its pathway is amino-acid biosynthesis; L-valine biosynthesis; L-valine from pyruvate: step 2/4. Functionally, involved in the biosynthesis of branched-chain amino acids (BCAA). Catalyzes an alkyl-migration followed by a ketol-acid reduction of (S)-2-acetolactate (S2AL) to yield (R)-2,3-dihydroxy-isovalerate. In the isomerase reaction, S2AL is rearranged via a Mg-dependent methyl migration to produce 3-hydroxy-3-methyl-2-ketobutyrate (HMKB). In the reductase reaction, this 2-ketoacid undergoes a metal-dependent reduction by NADPH to yield (R)-2,3-dihydroxy-isovalerate. The polypeptide is Ketol-acid reductoisomerase (NADP(+)) (Synechococcus sp. (strain CC9311)).